Reading from the N-terminus, the 415-residue chain is Probable tRNA pseudouridine synthase D (415 aa).

The active-site Nucleophile is the Asp-83. One can recognise a TRUD domain in the interval 158–378 (GFPNYFGYQR…PGRRRELLIR (221 aa)).

This sequence belongs to the pseudouridine synthase TruD family.

It catalyses the reaction uridine(13) in tRNA = pseudouridine(13) in tRNA. Functionally, could be responsible for synthesis of pseudouridine from uracil-13 in transfer RNAs. This Thermococcus gammatolerans (strain DSM 15229 / JCM 11827 / EJ3) protein is Probable tRNA pseudouridine synthase D.